Reading from the N-terminus, the 200-residue chain is Holliday junction branch migration complex subunit RuvA (200 aa).

Residues 1 to 63 (MYAYIKGTLS…EDAQLLYGFI (63 aa)) are domain I. A domain II region spans residues 64 to 142 (NEEEKEMFLS…ITEENSDDLL (79 aa)). The segment at 143–149 (QTQVNGN) is flexible linker. The tract at residues 150–200 (EQNQIISEALLALQALGYSKRELTKVEKSLNKHNVNSVDEAVKIGLQTLVS) is domain III.

This sequence belongs to the RuvA family. As to quaternary structure, homotetramer. Forms an RuvA(8)-RuvB(12)-Holliday junction (HJ) complex. HJ DNA is sandwiched between 2 RuvA tetramers; dsDNA enters through RuvA and exits via RuvB. An RuvB hexamer assembles on each DNA strand where it exits the tetramer. Each RuvB hexamer is contacted by two RuvA subunits (via domain III) on 2 adjacent RuvB subunits; this complex drives branch migration. In the full resolvosome a probable DNA-RuvA(4)-RuvB(12)-RuvC(2) complex forms which resolves the HJ.

It is found in the cytoplasm. Functionally, the RuvA-RuvB-RuvC complex processes Holliday junction (HJ) DNA during genetic recombination and DNA repair, while the RuvA-RuvB complex plays an important role in the rescue of blocked DNA replication forks via replication fork reversal (RFR). RuvA specifically binds to HJ cruciform DNA, conferring on it an open structure. The RuvB hexamer acts as an ATP-dependent pump, pulling dsDNA into and through the RuvAB complex. HJ branch migration allows RuvC to scan DNA until it finds its consensus sequence, where it cleaves and resolves the cruciform DNA. In Staphylococcus epidermidis (strain ATCC 35984 / DSM 28319 / BCRC 17069 / CCUG 31568 / BM 3577 / RP62A), this protein is Holliday junction branch migration complex subunit RuvA.